The chain runs to 166 residues: Regulatory protein RecX (166 aa).

The protein belongs to the RecX family.

The protein localises to the cytoplasm. In terms of biological role, modulates RecA activity. This Escherichia coli O139:H28 (strain E24377A / ETEC) protein is Regulatory protein RecX.